The chain runs to 674 residues: Pesticidal crystal protein Cry24Aa (674 aa).

Belongs to the delta endotoxin family.

Promotes colloidosmotic lysis by binding to the midgut epithelial cells of insects. The sequence is that of Pesticidal crystal protein Cry24Aa (cry24Aa) from Bacillus thuringiensis subsp. jegathesan.